The following is a 434-amino-acid chain: Enolase (434 aa).

Q163 lines the (2R)-2-phosphoglycerate pocket. The active-site Proton donor is E205. The Mg(2+) site is built by D243, E291, and D318. K343, R372, S373, and K394 together coordinate (2R)-2-phosphoglycerate. The active-site Proton acceptor is the K343.

It belongs to the enolase family. The cofactor is Mg(2+).

The protein localises to the cytoplasm. It is found in the secreted. The protein resides in the cell surface. The enzyme catalyses (2R)-2-phosphoglycerate = phosphoenolpyruvate + H2O. Its pathway is carbohydrate degradation; glycolysis; pyruvate from D-glyceraldehyde 3-phosphate: step 4/5. Functionally, catalyzes the reversible conversion of 2-phosphoglycerate (2-PG) into phosphoenolpyruvate (PEP). It is essential for the degradation of carbohydrates via glycolysis. The polypeptide is Enolase (Fusobacterium nucleatum subsp. nucleatum (strain ATCC 25586 / DSM 15643 / BCRC 10681 / CIP 101130 / JCM 8532 / KCTC 2640 / LMG 13131 / VPI 4355)).